Consider the following 380-residue polypeptide: Cytochrome b (380 aa).

The next 4 helical transmembrane spans lie at 33-53 (FGSL…FLAM), 77-98 (WLIR…YLHI), 113-133 (WNIG…GYVL), and 178-198 (FFAF…LHFF). Heme b contacts are provided by histidine 83 and histidine 97. Residues histidine 182 and histidine 196 each contribute to the heme b site. An a ubiquinone-binding site is contributed by histidine 201. A run of 4 helical transmembrane segments spans residues 226–246 (YKDL…SFFS), 288–308 (LGGV…PILH), 320–340 (LTQL…WIGG), and 347–367 (FIAV…ILIP).

The protein belongs to the cytochrome b family. As to quaternary structure, the cytochrome bc1 complex contains 3 respiratory subunits (MT-CYB, CYC1 and UQCRFS1), 2 core proteins (UQCRC1 and UQCRC2) and probably 6 low-molecular weight proteins. Heme b serves as cofactor.

Its subcellular location is the mitochondrion inner membrane. Functionally, component of the ubiquinol-cytochrome c reductase complex (complex III or cytochrome b-c1 complex) that is part of the mitochondrial respiratory chain. The b-c1 complex mediates electron transfer from ubiquinol to cytochrome c. Contributes to the generation of a proton gradient across the mitochondrial membrane that is then used for ATP synthesis. In Zenopsis nebulosa (Mirror dory), this protein is Cytochrome b (mt-cyb).